We begin with the raw amino-acid sequence, 168 residues long: Crossover junction endodeoxyribonuclease RuvC (168 aa).

Residues D10, E70, and D143 contribute to the active site. 3 residues coordinate Mg(2+): D10, E70, and D143.

The protein belongs to the RuvC family. As to quaternary structure, homodimer which binds Holliday junction (HJ) DNA. The HJ becomes 2-fold symmetrical on binding to RuvC with unstacked arms; it has a different conformation from HJ DNA in complex with RuvA. In the full resolvosome a probable DNA-RuvA(4)-RuvB(12)-RuvC(2) complex forms which resolves the HJ. Mg(2+) serves as cofactor.

The protein localises to the cytoplasm. It catalyses the reaction Endonucleolytic cleavage at a junction such as a reciprocal single-stranded crossover between two homologous DNA duplexes (Holliday junction).. The RuvA-RuvB-RuvC complex processes Holliday junction (HJ) DNA during genetic recombination and DNA repair. Endonuclease that resolves HJ intermediates. Cleaves cruciform DNA by making single-stranded nicks across the HJ at symmetrical positions within the homologous arms, yielding a 5'-phosphate and a 3'-hydroxyl group; requires a central core of homology in the junction. The consensus cleavage sequence is 5'-(A/T)TT(C/G)-3'. Cleavage occurs on the 3'-side of the TT dinucleotide at the point of strand exchange. HJ branch migration catalyzed by RuvA-RuvB allows RuvC to scan DNA until it finds its consensus sequence, where it cleaves and resolves the cruciform DNA. The polypeptide is Crossover junction endodeoxyribonuclease RuvC (Thermotoga maritima (strain ATCC 43589 / DSM 3109 / JCM 10099 / NBRC 100826 / MSB8)).